The primary structure comprises 300 residues: Cytochrome f (300 aa).

Residues 1 to 32 (MMTYLSKQFSKLLFGQLLFLFIGNLLLKPVQA) form the signal peptide. Heme-binding residues include Tyr33, Cys53, Cys56, and His57. A helical transmembrane segment spans residues 267-287 (LKTFIAFCVTVFIGQLAFVLK).

The protein belongs to the cytochrome f family. The 4 large subunits of the cytochrome b6-f complex are cytochrome b6, subunit IV (17 kDa polypeptide, petD), cytochrome f and the Rieske protein, while the 4 small subunits are PetG, PetL, PetM and PetN. The complex functions as a dimer. Heme is required as a cofactor.

It is found in the plastid. It localises to the chloroplast thylakoid membrane. Its function is as follows. Component of the cytochrome b6-f complex, which mediates electron transfer between photosystem II (PSII) and photosystem I (PSI), cyclic electron flow around PSI, and state transitions. This chain is Cytochrome f, found in Cyanidioschyzon merolae (strain NIES-3377 / 10D) (Unicellular red alga).